Consider the following 201-residue polypeptide: Large ribosomal subunit protein uL4 (201 aa).

Residues 45–71 form a disordered region; it reads AQKTRAEVTGSGKKPWRQKGTGRARAG.

The protein belongs to the universal ribosomal protein uL4 family. In terms of assembly, part of the 50S ribosomal subunit.

One of the primary rRNA binding proteins, this protein initially binds near the 5'-end of the 23S rRNA. It is important during the early stages of 50S assembly. It makes multiple contacts with different domains of the 23S rRNA in the assembled 50S subunit and ribosome. In terms of biological role, forms part of the polypeptide exit tunnel. This Shewanella oneidensis (strain ATCC 700550 / JCM 31522 / CIP 106686 / LMG 19005 / NCIMB 14063 / MR-1) protein is Large ribosomal subunit protein uL4.